A 284-amino-acid polypeptide reads, in one-letter code: Nucleotide-binding protein NGK_0463 (284 aa).

8–15 (GLSGSGKS) is an ATP binding site. GTP is bound at residue 58–61 (DVRS).

Belongs to the RapZ-like family.

Displays ATPase and GTPase activities. The sequence is that of Nucleotide-binding protein NGK_0463 from Neisseria gonorrhoeae (strain NCCP11945).